The sequence spans 92 residues: uncharacterized protein (92 aa).

The chain crosses the membrane as a helical span at residues 65–86 (AVWIFWLCFLVSGLSRAFLVYF).

The protein resides in the membrane. This is an uncharacterized protein from Treponema pallidum (strain Nichols).